Here is a 363-residue protein sequence, read N- to C-terminus: Carbamoyl phosphate synthase small chain (363 aa).

Positions 1-172 (MTKRILMLED…AFASPGDGKR (172 aa)) are CPSase. Ser-46, Gly-220, and Gly-222 together coordinate L-glutamine. The Glutamine amidotransferase type-1 domain maps to 172–359 (RVVLVDYGVK…MEMMNGKEEG (188 aa)). Residue Cys-247 is the Nucleophile of the active site. L-glutamine-binding residues include Leu-248, Gln-251, Asn-289, Gly-291, and Tyr-292. Residues His-332 and Glu-334 contribute to the active site.

This sequence belongs to the CarA family. In terms of assembly, composed of two chains; the small (or glutamine) chain promotes the hydrolysis of glutamine to ammonia, which is used by the large (or ammonia) chain to synthesize carbamoyl phosphate. Tetramer of heterodimers (alpha,beta)4.

The enzyme catalyses hydrogencarbonate + L-glutamine + 2 ATP + H2O = carbamoyl phosphate + L-glutamate + 2 ADP + phosphate + 2 H(+). It catalyses the reaction L-glutamine + H2O = L-glutamate + NH4(+). Its pathway is amino-acid biosynthesis; L-arginine biosynthesis; carbamoyl phosphate from bicarbonate: step 1/1. It functions in the pathway pyrimidine metabolism; UMP biosynthesis via de novo pathway; (S)-dihydroorotate from bicarbonate: step 1/3. In terms of biological role, small subunit of the glutamine-dependent carbamoyl phosphate synthetase (CPSase). CPSase catalyzes the formation of carbamoyl phosphate from the ammonia moiety of glutamine, carbonate, and phosphate donated by ATP, constituting the first step of 2 biosynthetic pathways, one leading to arginine and/or urea and the other to pyrimidine nucleotides. The small subunit (glutamine amidotransferase) binds and cleaves glutamine to supply the large subunit with the substrate ammonia. The polypeptide is Carbamoyl phosphate synthase small chain (Listeria monocytogenes serovar 1/2a (strain ATCC BAA-679 / EGD-e)).